A 303-amino-acid polypeptide reads, in one-letter code: Phosphatidylglycerol--prolipoprotein diacylglyceryl transferase (303 aa).

A run of 3 helical transmembrane segments spans residues 18–38 (VGFFTLRWYGLLIAFAVLIGL), 58–78 (LLPILVISSIIGARAYYVIFE), and 107–127 (WQGGIAIHGALLAGTIAILIF). Position 154 (R154) interacts with a 1,2-diacyl-sn-glycero-3-phospho-(1'-sn-glycerol). 2 helical membrane-spanning segments follow: residues 193–213 (PTFLYESIWNILLFLCLISLI) and 266–286 (IAQLISTILFGLGLLGLFWIY).

Belongs to the Lgt family.

It is found in the cell inner membrane. The catalysed reaction is L-cysteinyl-[prolipoprotein] + a 1,2-diacyl-sn-glycero-3-phospho-(1'-sn-glycerol) = an S-1,2-diacyl-sn-glyceryl-L-cysteinyl-[prolipoprotein] + sn-glycerol 1-phosphate + H(+). Its pathway is protein modification; lipoprotein biosynthesis (diacylglyceryl transfer). Functionally, catalyzes the transfer of the diacylglyceryl group from phosphatidylglycerol to the sulfhydryl group of the N-terminal cysteine of a prolipoprotein, the first step in the formation of mature lipoproteins. The chain is Phosphatidylglycerol--prolipoprotein diacylglyceryl transferase from Prochlorococcus marinus (strain MIT 9211).